A 59-amino-acid chain; its full sequence is Cecropin-A1 (59 aa).

The signal sequence occupies residues 1–23 (MNFTKLFAIVLLAALVLLGQTEA).

It belongs to the cecropin family.

The protein resides in the secreted. In terms of biological role, cecropins have lytic and antibacterial activity against several Gram-positive and Gram-negative bacteria. The protein is Cecropin-A1 (CECA1) of Aedes albopictus (Asian tiger mosquito).